Reading from the N-terminus, the 376-residue chain is MAKRDYYEVLGVSKSASADEIKKAYRKLSKQYHPDINKEAGADEKFKEISEAYEALSDPQKRAQYDQYGHVDPNQGFGGGAGGGFSGGGFSGFEDIFDTFFGGGGRQQDPNAPRQGSDLQYTMRLKFKEAIFGKDAEIEIPREENCDTCHGSGAKPGTTPEKCSHCGGKGSINVEQNTPFGRVVNKRTCQYCNGTGKEIKEKCPTCHGKGRVTKTKKIKVKVPAGVNDGQQMRVSGEGEAGINGGPNGDLYVVFVVIPDEFFEREADDIYVEVPITFVQATLGDEIDVPTVHGKVRLKIPSGTQTGTTFRLRGKGVPHLRGNGTGDQHVIVKVIVPKKLDDKQKEILREFASTTGDKVDEQTSGFFDKMKRAFKGD.

In terms of domain architecture, J spans Asp-5–Gly-69. The CR-type zinc finger occupies Gly-133–Thr-215. Cys-146, Cys-149, Cys-163, Cys-166, Cys-189, Cys-192, Cys-203, and Cys-206 together coordinate Zn(2+). CXXCXGXG motif repeat units follow at residues Cys-146–Gly-153, Cys-163–Gly-170, Cys-189–Gly-196, and Cys-203–Gly-210.

It belongs to the DnaJ family. Homodimer. Requires Zn(2+) as cofactor.

The protein resides in the cytoplasm. In terms of biological role, participates actively in the response to hyperosmotic and heat shock by preventing the aggregation of stress-denatured proteins and by disaggregating proteins, also in an autonomous, DnaK-independent fashion. Unfolded proteins bind initially to DnaJ; upon interaction with the DnaJ-bound protein, DnaK hydrolyzes its bound ATP, resulting in the formation of a stable complex. GrpE releases ADP from DnaK; ATP binding to DnaK triggers the release of the substrate protein, thus completing the reaction cycle. Several rounds of ATP-dependent interactions between DnaJ, DnaK and GrpE are required for fully efficient folding. Also involved, together with DnaK and GrpE, in the DNA replication of plasmids through activation of initiation proteins. This chain is Chaperone protein DnaJ, found in Listeria monocytogenes serotype 4b (strain CLIP80459).